The following is a 792-amino-acid chain: RNA-binding protein RRM4 (792 aa).

The tract at residues 37–60 (TDSTAQASHAAEQTIDAHQQAGDV) is disordered. RRM domains are found at residues 72–145 (PLLY…QDAS), 154–235 (KPRL…IDTA), and 321–398 (CNLF…LHEP). The segment covering 412-424 (AANADNSDMSSNS) has biased composition (low complexity). 2 disordered regions span residues 412–438 (AANA…RQSR) and 630–649 (DESG…APVP). A compositionally biased stretch (polar residues) spans 640–649 (RASSGSAPVP). A PABC domain is found at 715 to 792 (ATDDFIDSLQ…QHKVAAGLNK (78 aa)).

The protein belongs to the polyadenylate-binding protein type-1 family. Part of large ribonucleoprotein complexes (mRNPs) containing RNA-binding proteins RRM4 and PAB1, endosome-binding protein UPA1, core scaffold protein UPA2 and associated factor GRP1. Interacts (via PABC domain) with UPA1 (via PAM2 domain).

It localises to the cytoplasm. The protein localises to the cytoskeleton. Its subcellular location is the endosome. Key RNA-binding protein involved in the formation of polar-growing hyphae which is essential for infection by the plant pathogen. During filamentation, assembles into particles that shuttle bidirectionally along microtubules to both poles. The RRM4 transport particles are part of the endosomal mRNP transport that regulates polarity of the infectious hyphae by transporting distinct mRNAs encoding, for example, the ubiquitin fusion protein UBI1, the small G protein RHO3, or the septin CDC3, from the nucleus to cell poles. Recognizes a broad spectrum of cargo mRNAs and precisely binds at stop codons, which constitute landmark sites of translation, suggesting an intimate connection of mRNA transport and translation. Also binds to the specific binding motif UAUG of cargo mRNAs via its third RRM. Plus-end-directed KIN3, a kinesin-3 type motor, mediates anterograde transport of RRM4-containing mRNPs whereas split dynein DYM1-DYN2 functions in retrograde movement of mRNPs. The protein is RNA-binding protein RRM4 of Mycosarcoma maydis (Corn smut fungus).